Reading from the N-terminus, the 608-residue chain is Membrane protein insertase YidC (608 aa).

The chain crosses the membrane as a helical span at residues L8–P28. Residues P33 to T61 form a disordered region. 5 consecutive transmembrane segments (helical) span residues M378–Y398, L448–L468, L482–P502, S506–V526, and I542–V562.

Belongs to the OXA1/ALB3/YidC family. Type 1 subfamily. Interacts with the Sec translocase complex via SecD. Specifically interacts with transmembrane segments of nascent integral membrane proteins during membrane integration.

It localises to the cell inner membrane. Required for the insertion and/or proper folding and/or complex formation of integral membrane proteins into the membrane. Involved in integration of membrane proteins that insert both dependently and independently of the Sec translocase complex, as well as at least some lipoproteins. Aids folding of multispanning membrane proteins. This is Membrane protein insertase YidC from Ruegeria sp. (strain TM1040) (Silicibacter sp.).